The chain runs to 496 residues: Glycerol kinase (496 aa).

Thr12 lines the ADP pocket. ATP contacts are provided by Thr12, Thr13, and Ser14. Thr12 is a binding site for sn-glycerol 3-phosphate. Arg16 is an ADP binding site. Residues Arg82, Glu83, Tyr134, and Asp244 each coordinate sn-glycerol 3-phosphate. Residues Arg82, Glu83, Tyr134, Asp244, and Gln245 each contribute to the glycerol site. Residues Thr266 and Gly309 each contribute to the ADP site. ATP-binding residues include Thr266, Gly309, Gln313, and Gly410. The ADP site is built by Gly410 and Asn414.

It belongs to the FGGY kinase family.

The enzyme catalyses glycerol + ATP = sn-glycerol 3-phosphate + ADP + H(+). The protein operates within polyol metabolism; glycerol degradation via glycerol kinase pathway; sn-glycerol 3-phosphate from glycerol: step 1/1. With respect to regulation, inhibited by fructose 1,6-bisphosphate (FBP). Functionally, key enzyme in the regulation of glycerol uptake and metabolism. Catalyzes the phosphorylation of glycerol to yield sn-glycerol 3-phosphate. This Treponema denticola (strain ATCC 35405 / DSM 14222 / CIP 103919 / JCM 8153 / KCTC 15104) protein is Glycerol kinase.